The sequence spans 97 residues: Putative pterin-4-alpha-carbinolamine dehydratase (97 aa).

The protein belongs to the pterin-4-alpha-carbinolamine dehydratase family.

The enzyme catalyses (4aS,6R)-4a-hydroxy-L-erythro-5,6,7,8-tetrahydrobiopterin = (6R)-L-erythro-6,7-dihydrobiopterin + H2O. The polypeptide is Putative pterin-4-alpha-carbinolamine dehydratase (Rhizorhabdus wittichii (strain DSM 6014 / CCUG 31198 / JCM 15750 / NBRC 105917 / EY 4224 / RW1) (Sphingomonas wittichii)).